A 344-amino-acid chain; its full sequence is MMVIRPVERSDVSALMQLASKTGGGLTSLPANEATLSVRIERAIKTWQGELPKSEQGYVFVLEDSETGTVAGICAIEVAVGLNDPWYNYRVGTLVHASKELNVYNALPTLFLSNDHTGSSELCTLFLDPKWRKEGNGYLLSKSRFMFMAAFRDKFNDKVVAEMRGVIDEHGYSPFWQSLGKRFFSMDFSRADFLCGTGQKAFIAELMPKHPIYTYFLSQEAQDVIGQVHPQTAPARAVLEKEGFRYRNYIDIFDGGPTLECDIDRVRAIRKSRLVEVAEGQPAQGDFPACLVANENYHHFRVVLVRTDPATERLILTAAQLDVLKCHAGDRVRLVRLCAEEKTA.

Succinyl-CoA is bound at residue leucine 125. Histidine 229 acts as the Proton donor in catalysis.

This sequence belongs to the arginine N-succinyltransferase family.

It catalyses the reaction succinyl-CoA + L-arginine = N(2)-succinyl-L-arginine + CoA + H(+). It participates in amino-acid degradation; L-arginine degradation via AST pathway; L-glutamate and succinate from L-arginine: step 1/5. In terms of biological role, catalyzes the transfer of succinyl-CoA to arginine to produce N(2)-succinylarginine. This is Arginine N-succinyltransferase from Escherichia coli (strain UTI89 / UPEC).